The primary structure comprises 433 residues: Eukaryotic peptide chain release factor subunit 1 (433 aa).

Gln-182 bears the N5-methylglutamine mark. At Ser-425 the chain carries Phosphoserine.

It belongs to the eukaryotic release factor 1 family. In terms of assembly, component of the eRF1-eRF3-GTP ternary complex, composed of sup45/eRF1, sup35/eRF3 and GTP.

The protein resides in the cytoplasm. Functionally, component of the eRF1-eRF3-GTP ternary complex, a ternary complex that mediates translation termination in response to the termination codons. The eRF1-eRF3-GTP complex binds to a stop codon in the ribosomal A-site. Sup45/eRF1 is responsible for stop codon recognition and inducing hydrolysis of peptidyl-tRNA. Following GTP hydrolysis by sup35/eRF3, sup35/eRF3 dissociates, permitting sup45/eRF1 to accommodate fully in the A-site. The sequence is that of Eukaryotic peptide chain release factor subunit 1 (sup45) from Schizosaccharomyces pombe (strain 972 / ATCC 24843) (Fission yeast).